The primary structure comprises 530 residues: UDP-glucuronosyltransferase 1A9 (530 aa).

The signal sequence occupies residues 1 to 25 (MACTGWTSPLPLCVCLLLTCGFAEA). A glycan (N-linked (GlcNAc...) asparagine) is linked at Asn-71. Residue Lys-99 is modified to N6-succinyllysine. N-linked (GlcNAc...) asparagine glycosylation is found at Asn-292 and Asn-344. The chain crosses the membrane as a helical span at residues 488–504 (VIGFLLAVVLTVAFITF).

Belongs to the UDP-glycosyltransferase family. As to quaternary structure, homodimer. Homooligomer. Interacts with UGT1A1, UGT1A3, UGT1A4, UGT1A6, UGT1A7, UGT1A8 and UGT1A10 to form heterodimers. Isoform 1 interacts with isoform 2/i2 suggesting that oligomerization is involved in negative regulation of transferase activity by isoform 2. Isoform 1 also interacts with respective i2 isoforms of UGT1A1, UGT1A3, UGT1A4, UGT1A6, UGT1A7, UGT1A8 and UGT1A10. As to expression, expressed in liver, kidney, colon, esophagus and small intestine.

It is found in the endoplasmic reticulum membrane. The enzyme catalyses glucuronate acceptor + UDP-alpha-D-glucuronate = acceptor beta-D-glucuronoside + UDP + H(+). It carries out the reaction 2-hydroxy-17beta-estradiol + UDP-alpha-D-glucuronate = 2-hydroxy-17beta-estradiol 3-O-(beta-D-glucuronate) + UDP + H(+). The catalysed reaction is 4-hydroxy-17beta-estradiol + UDP-alpha-D-glucuronate = 17beta-estradiol 4-O-(beta-D-glucuronate) + UDP + H(+). It catalyses the reaction 2-hydroxyestrone + UDP-alpha-D-glucuronate = 2-hydroxyestrone 3-O-(beta-D-glucuronate) + UDP + H(+). The enzyme catalyses 4-hydroxyestrone + UDP-alpha-D-glucuronate = estrone 4-O-(beta-D-glucuronate) + UDP + H(+). It carries out the reaction prunetin + UDP-alpha-D-glucuronate = prunetin-5-O-beta-D-glucuronide + UDP. The catalysed reaction is 8-iso-prostaglandin F2alpha + UDP-alpha-D-glucuronate = 8-iso-prostaglandin F2alpha-glucuronide + UDP + H(+). It catalyses the reaction 5-epi-5-F2t-IsoP + UDP-alpha-D-glucuronate = 5-epi-5-F2t-IsoP-glucuronide + UDP + H(+). The enzyme catalyses (5Z,8Z,11Z,14Z)-eicosatetraenoate + UDP-alpha-D-glucuronate = O-[(5Z),(8Z),(11Z),(14Z)-eicosatetraenoyl]-beta-D-glucuronate + UDP. It carries out the reaction 15-hydroxy-(5Z,8Z,11Z,13E)-eicosatetraenoate + UDP-alpha-D-glucuronate = 15-O-(beta-D-glucuronosyl)-(5Z,8Z,11Z,14Z)-eicosatetraenoate + UDP + H(+). The catalysed reaction is prostaglandin B1 + UDP-alpha-D-glucuronate = 15-O-(beta-D-glucuronosyl)-prostaglandin B1 + UDP + H(+). It catalyses the reaction (E)-ferulate + UDP-alpha-D-glucuronate = (E)-4-O-(beta-D-glucuronosyl)-ferulate + UDP + H(+). The enzyme catalyses (E)-ferulate + UDP-alpha-D-glucuronate = (E)-ferulic acid beta-D-glucuronate ester + UDP. It carries out the reaction candesartan + UDP-alpha-D-glucuronate = candesartan O-beta-D-glucuronoside + UDP. The catalysed reaction is SN-38 + UDP-alpha-D-glucuronate = SN-38 O-beta-D-glucuronide + UDP + H(+). It catalyses the reaction mycophenolate + UDP-alpha-D-glucuronate = mycophenolate 7-O-beta-D-glucuronide + UDP + H(+). In terms of biological role, UDP-glucuronosyltransferase (UGT) that catalyzes phase II biotransformation reactions in which lipophilic substrates are conjugated with glucuronic acid to increase the metabolite's water solubility, thereby facilitating excretion into either the urine or bile. Essential for the elimination and detoxification of drugs, xenobiotics and endogenous compounds. Catalyzes the glucuronidation of endogenous estrogen hormones such as estradiol and estrone. Involved in the glucuronidation of arachidonic acid (AA) and AA-derived eicosanoids including 15-HETE, PGB1 and F2-isoprostanes (8-iso-PGF2alpha and 5-epi-5-F2t-IsoP). Glucuronates the phytochemical ferulic acid efficently at both the phenolic or the carboxylic acid group. Also catalyzes the glucuronidation of the isoflavones genistein, daidzein, glycitein, formononetin, biochanin A and prunetin, which are phytoestrogens with anticancer and cardiovascular properties. Involved in the glucuronidation of the AGTR1 angiotensin receptor antagonist caderastan, a drug which can inhibit the effect of angiotensin II. Involved in the biotransformation of 7-ethyl-10-hydroxycamptothecin (SN-38), the pharmacologically active metabolite of the anticancer drug irinotecan. Also metabolizes mycophenolate, an immunosuppressive agent. Functionally, lacks UGT glucuronidation activity but acts as a negative regulator of isoform 1. The polypeptide is UDP-glucuronosyltransferase 1A9 (Homo sapiens (Human)).